An 89-amino-acid polypeptide reads, in one-letter code: Small ribosomal subunit protein bS20 (89 aa).

Residues methionine 1–serine 28 are disordered.

It belongs to the bacterial ribosomal protein bS20 family.

In terms of biological role, binds directly to 16S ribosomal RNA. This is Small ribosomal subunit protein bS20 from Mannheimia succiniciproducens (strain KCTC 0769BP / MBEL55E).